The sequence spans 335 residues: UPF0353 protein Mflv_3659 (335 aa).

2 consecutive transmembrane segments (helical) span residues 18–38 (WFFL…VVQL) and 67–87 (LPAV…AGPT). The 197-residue stretch at 98-294 (VVMLVIDVSQ…EQLKQVFTNL (197 aa)) folds into the VWFA domain. Residues 309–329 (VGWLRLGAGVLALAALGALLI) form a helical membrane-spanning segment.

Belongs to the UPF0353 family.

It localises to the cell membrane. The sequence is that of UPF0353 protein Mflv_3659 from Mycolicibacterium gilvum (strain PYR-GCK) (Mycobacterium gilvum (strain PYR-GCK)).